A 409-amino-acid chain; its full sequence is Elongation factor Tu, chloroplastic (409 aa).

Residues 10–214 (KPHVNIGTIG…AVDTYIPTPE (205 aa)) form the tr-type G domain. The interval 19-26 (GHVDHGKT) is G1. A GTP-binding site is contributed by 19-26 (GHVDHGKT). Thr26 lines the Mg(2+) pocket. The G2 stretch occupies residues 60–64 (GITIN). The interval 81-84 (DCPG) is G3. Residues 81–85 (DCPGH) and 136–139 (NKED) contribute to the GTP site. The G4 stretch occupies residues 136-139 (NKED). Positions 174-176 (SAL) are G5.

The protein belongs to the TRAFAC class translation factor GTPase superfamily. Classic translation factor GTPase family. EF-Tu/EF-1A subfamily.

The protein resides in the plastid. The protein localises to the chloroplast. It catalyses the reaction GTP + H2O = GDP + phosphate + H(+). GTP hydrolase that promotes the GTP-dependent binding of aminoacyl-tRNA to the A-site of ribosomes during protein biosynthesis. The sequence is that of Elongation factor Tu, chloroplastic (tufA) from Porphyra purpurea (Red seaweed).